A 206-amino-acid polypeptide reads, in one-letter code: MGGKWSKSSLVGWPEVRDRLRRTQTAAEGVGPVSRDLARHGAITSRNTSQTNETLAWLEEVQNEEVGFPVRPQVPLRPMTFKGAFDLSHFLKEKGGLEGLVYSKKRQEILDLWVYHTQGFFPDWQNYTPGPGIRYPLTFGWCFKLVPLEPEEVERANEGDNNILLHPICQHGQEDEAREVLVWTFDSRLALKHRARELHPEYYKDC.

G2 carries N-myristoyl glycine; by host lipidation. Residue S6 is modified to Phosphoserine; by host. The tract at residues 62 to 65 is acidic; interacts with host PACS1 and PACS2; stabilizes the interaction of NEF/MHC-I with host AP1M1; necessary for MHC-I internalization; that stretch reads QNEE. The segment at 69–78 is SH3-binding; interaction with Src family tyrosine kinases; it reads PVRPQVPLRP. Residues 72 to 75 carry the PxxP; stabilizes the interaction of NEF/MHC-I with host AP1M1; necessary for MHC-I internalization motif; sequence PQVP. The tract at residues 108 to 124 is mediates dimerization, Nef-PTE1 interaction; the sequence is EILDLWVYHTQGFFPDW. The interval 148 to 180 is binding to ATP6V1H; that stretch reads LEPEEVERANEGDNNILLHPICQHGQEDEAREV. The Dileucine internalization motif; necessary for CD4 internalization motif lies at 164–165; sequence LL. A Diacidic; necessary for CD4 internalization motif is present at residues 174–175; the sequence is ED.

This sequence belongs to the lentivirus primate group Nef protein family. Monomer; cytosolic form. Homodimer; membrane bound form. Interacts with Nef associated p21-activated kinase (PAK2); this interaction activates PAK2. Associates with the Nef-MHC-I-AP1 complex; this complex is required for MHC-I internalization. Interacts (via C-terminus) with host PI3-kinase. Interacts with host PACS1; this interaction seems to be weak. Interacts with host PACS2. Interacts with host LCK and MAPK3; these interactions inhibit the kinase activity of the latter. Interacts with host ATP6V1H; this interaction may play a role in CD4 endocytosis. Associates with the CD4-Nef-AP2 complex; this complex is required for CD4 internalization. Interacts with host AP2 subunit alpha and AP2 subunit sigma2. Interacts with TCR-zeta chain; this interaction up-regulates the Fas ligand (FasL) surface expression. Interacts with host HCK, LYN, and SRC; these interactions activate the Src family kinases. Interacts with MAP3K5; this interaction inhibits the Fas and TNFR-mediated death signals. Interacts with beta-COP and PTE1. Interacts with human RACK1; this increases Nef phosphorylation by PKC. Interacts with TP53; this interaction decreases the half-life of TP53, protecting the infected cell against p53-mediated apoptosis. The virion-associated Nef proteins are cleaved by the viral protease to release the soluble C-terminal core protein. Nef is probably cleaved concomitantly with viral structural proteins on maturation of virus particles. Post-translationally, myristoylated. In terms of processing, phosphorylated on serine residues, probably by host PKCdelta and theta.

The protein localises to the host cell membrane. It is found in the virion. Its subcellular location is the secreted. The protein resides in the host Golgi apparatus membrane. In terms of biological role, factor of infectivity and pathogenicity, required for optimal virus replication. Alters numerous pathways of T-lymphocyte function and down-regulates immunity surface molecules in order to evade host defense and increase viral infectivity. Alters the functionality of other immunity cells, like dendritic cells, monocytes/macrophages and NK cells. Its function is as follows. In infected CD4(+) T-lymphocytes, down-regulates the surface MHC-I, mature MHC-II, CD4, CD28, CCR5 and CXCR4 molecules. Mediates internalization and degradation of host CD4 through the interaction of with the cytoplasmic tail of CD4, the recruitment of AP-2 (clathrin adapter protein complex 2), internalization through clathrin coated pits, and subsequent transport to endosomes and lysosomes for degradation. Diverts host MHC-I molecules to the trans-Golgi network-associated endosomal compartments by an endocytic pathway to finally target them for degradation. MHC-I down-regulation may involve AP-1 (clathrin adapter protein complex 1) or possibly Src family kinase-ZAP70/Syk-PI3K cascade recruited by PACS2. In consequence infected cells are masked for immune recognition by cytotoxic T-lymphocytes. Decreasing the number of immune receptors also prevents reinfection by more HIV particles (superinfection). Down-regulates host SERINC3 and SERINC5 thereby excluding these proteins from the viral particles. Virion infectivity is drastically higher when SERINC3 or SERINC5 are excluded from the viral envelope, because these host antiviral proteins impair the membrane fusion event necessary for subsequent virion penetration. Bypasses host T-cell signaling by inducing a transcriptional program nearly identical to that of anti-CD3 cell activation. Interaction with TCR-zeta chain up-regulates the Fas ligand (FasL). Increasing surface FasL molecules and decreasing surface MHC-I molecules on infected CD4(+) cells send attacking cytotoxic CD8+ T-lymphocytes into apoptosis. Functionally, plays a role in optimizing the host cell environment for viral replication without causing cell death by apoptosis. Protects the infected cells from apoptosis in order to keep them alive until the next virus generation is ready to strike. Inhibits the Fas and TNFR-mediated death signals by blocking MAP3K5/ASK1. Decreases the half-life of TP53, protecting the infected cell against p53-mediated apoptosis. Inhibits the apoptotic signals regulated by the Bcl-2 family proteins through the formation of a Nef/PI3-kinase/PAK2 complex that leads to activation of PAK2 and induces phosphorylation of host BAD. In terms of biological role, extracellular Nef protein targets CD4(+) T-lymphocytes for apoptosis by interacting with CXCR4 surface receptors. This chain is Protein Nef, found in Simian immunodeficiency virus (isolate MB66) (SIV-cpz).